The chain runs to 454 residues: Guanine deaminase (454 aa).

Residues H82 and H84 each coordinate Zn(2+). Substrate-binding positions include H84–Q87, R213–F214, H240–E243, and D330. Zn(2+) is bound by residues H240 and D330. A Phosphoserine modification is found at S453.

The protein belongs to the metallo-dependent hydrolases superfamily. ATZ/TRZ family. In terms of assembly, homodimer. Zn(2+) serves as cofactor.

The enzyme catalyses guanine + H2O + H(+) = xanthine + NH4(+). It participates in purine metabolism; guanine degradation; xanthine from guanine: step 1/1. Functionally, catalyzes the hydrolytic deamination of guanine, producing xanthine and ammonia. This is Guanine deaminase (GDA) from Pongo abelii (Sumatran orangutan).